Here is a 163-residue protein sequence, read N- to C-terminus: 3-dehydroquinate dehydratase (163 aa).

Catalysis depends on Tyr28, which acts as the Proton acceptor. The substrate site is built by Asn80, His86, and Asp93. The Proton donor role is filled by His106. Substrate is bound by residues 107 to 108 (IS) and Arg117.

The protein belongs to the type-II 3-dehydroquinase family. In terms of assembly, homododecamer.

It catalyses the reaction 3-dehydroquinate = 3-dehydroshikimate + H2O. It functions in the pathway metabolic intermediate biosynthesis; chorismate biosynthesis; chorismate from D-erythrose 4-phosphate and phosphoenolpyruvate: step 3/7. In terms of biological role, catalyzes a trans-dehydration via an enolate intermediate. The chain is 3-dehydroquinate dehydratase from Bradyrhizobium sp. (strain BTAi1 / ATCC BAA-1182).